The following is a 209-amino-acid chain: Imidazole glycerol phosphate synthase subunit HisH (209 aa).

A Glutamine amidotransferase type-1 domain is found at 3-209; sequence KIGLIDYGMG…WINWLKKNKF (207 aa). Cys-81 (nucleophile) is an active-site residue. Active-site residues include His-185 and Glu-187.

In terms of assembly, heterodimer of HisH and HisF.

Its subcellular location is the cytoplasm. It carries out the reaction 5-[(5-phospho-1-deoxy-D-ribulos-1-ylimino)methylamino]-1-(5-phospho-beta-D-ribosyl)imidazole-4-carboxamide + L-glutamine = D-erythro-1-(imidazol-4-yl)glycerol 3-phosphate + 5-amino-1-(5-phospho-beta-D-ribosyl)imidazole-4-carboxamide + L-glutamate + H(+). The enzyme catalyses L-glutamine + H2O = L-glutamate + NH4(+). Its pathway is amino-acid biosynthesis; L-histidine biosynthesis; L-histidine from 5-phospho-alpha-D-ribose 1-diphosphate: step 5/9. IGPS catalyzes the conversion of PRFAR and glutamine to IGP, AICAR and glutamate. The HisH subunit catalyzes the hydrolysis of glutamine to glutamate and ammonia as part of the synthesis of IGP and AICAR. The resulting ammonia molecule is channeled to the active site of HisF. In Prochlorococcus marinus (strain NATL2A), this protein is Imidazole glycerol phosphate synthase subunit HisH.